The sequence spans 117 residues: Ig heavy chain V region MOPC 47A (117 aa).

An Ig-like domain is found at 1-113 (EVKLVESGGG…FAYWGZGTLV (113 aa)).

This is Ig heavy chain V region MOPC 47A from Mus musculus (Mouse).